A 340-amino-acid chain; its full sequence is GTP-binding protein REM 2 (340 aa).

Residues 1 to 13 (MHTDLDTDMDMDT) are compositionally biased toward acidic residues. Residues 1–107 (MHTDLDTDMD…SDSLGSGEAA (107 aa)) form a disordered region. At S27 the chain carries Phosphoserine. Positions 40–53 (LLKKSEKLLAELDR) are enriched in basic and acidic residues. The segment covering 93 to 104 (SSSGSSDSLGSG) has biased composition (low complexity). GTP contacts are provided by residues 121–128 (GESGVGKS), 229–232 (NKSD), and 260–261 (AA). The interval 283–308 (RNHAGGQRPDPGSPEGPAPPARRESL) is disordered. The segment covering 293-302 (PGSPEGPAPP) has biased composition (pro residues). S295 bears the Phosphoserine mark.

This sequence belongs to the small GTPase superfamily. RGK family.

The protein resides in the cell membrane. In terms of biological role, binds GTP saturably and exhibits a low intrinsic rate of GTP hydrolysis. The protein is GTP-binding protein REM 2 (REM2) of Homo sapiens (Human).